Reading from the N-terminus, the 305-residue chain is Nucleotide-binding protein Rxyl_2009 (305 aa).

Residue 24–31 participates in ATP binding; the sequence is GLSGAGKS. Residue 75–78 coordinates GTP; the sequence is DIRG.

This sequence belongs to the RapZ-like family.

Functionally, displays ATPase and GTPase activities. This chain is Nucleotide-binding protein Rxyl_2009, found in Rubrobacter xylanophilus (strain DSM 9941 / JCM 11954 / NBRC 16129 / PRD-1).